The following is a 282-amino-acid chain: 2-dehydro-3-deoxyphosphooctonate aldolase (282 aa).

Belongs to the KdsA family.

The protein localises to the cytoplasm. It catalyses the reaction D-arabinose 5-phosphate + phosphoenolpyruvate + H2O = 3-deoxy-alpha-D-manno-2-octulosonate-8-phosphate + phosphate. Its pathway is carbohydrate biosynthesis; 3-deoxy-D-manno-octulosonate biosynthesis; 3-deoxy-D-manno-octulosonate from D-ribulose 5-phosphate: step 2/3. It participates in bacterial outer membrane biogenesis; lipopolysaccharide biosynthesis. The chain is 2-dehydro-3-deoxyphosphooctonate aldolase from Shewanella baltica (strain OS223).